The chain runs to 620 residues: Pentatricopeptide repeat-containing protein At5g66520 (620 aa).

10 PPR repeats span residues 79–113 (DTFL…SAPH), 114–148 (NAYT…GYEN), 149–179 (DVYA…IPEP), 180–210 (DDVS…MAEK), 211–245 (NAIS…DVEP), 246–280 (DNVS…RIRM), 281–311 (DSVL…IKKK), 312–346 (SVQA…GIKP), 347–382 (NVIT…NLKP), and 383–413 (TIEH…MPLK). The tract at residues 418-493 (IWGALLKACR…VPGCSTISLE (76 aa)) is type E motif. Residues 494–524 (GTTHEFLAGDRSHPEIEKIQSKWRIMRRKLE) form a type E(+) motif region. Residues 525–620 (ENGYVPELEE…DGKCSCGDYW (96 aa)) are type DYW motif.

The protein belongs to the PPR family. PCMP-H subfamily.

This Arabidopsis thaliana (Mouse-ear cress) protein is Pentatricopeptide repeat-containing protein At5g66520 (PCMP-H61).